The following is a 134-amino-acid chain: D-ribose pyranase (134 aa).

H20 serves as the catalytic Proton donor. Residues D28, H101, and 123 to 125 (YCN) contribute to the substrate site.

It belongs to the RbsD / FucU family. RbsD subfamily. As to quaternary structure, homodecamer.

Its subcellular location is the cytoplasm. The enzyme catalyses beta-D-ribopyranose = beta-D-ribofuranose. The protein operates within carbohydrate metabolism; D-ribose degradation; D-ribose 5-phosphate from beta-D-ribopyranose: step 1/2. Functionally, catalyzes the interconversion of beta-pyran and beta-furan forms of D-ribose. In Pseudomonas fluorescens (strain Pf0-1), this protein is D-ribose pyranase.